The following is a 92-amino-acid chain: Large ribosomal subunit protein eL43z (92 aa).

The C4-type zinc finger occupies 39–60 (CEFCGKYSVKRKVVGIWGCKDC).

This sequence belongs to the eukaryotic ribosomal protein eL43 family.

This chain is Large ribosomal subunit protein eL43z (RPL37AB), found in Arabidopsis thaliana (Mouse-ear cress).